The sequence spans 321 residues: uncharacterized protein (321 aa).

9 helical membrane passes run 12–32, 52–72, 86–106, 109–129, 136–156, 168–188, 214–234, 254–274, and 292–312; these read IGVEFIIFSVYAVFSISWAAT, LITSMIVVAKIFGASFTAFLV, ILMSSGIFLSFVDSYSGILII, LTGLGSACALVCLVPIAQQWF, FVISFNITSNLVGITLGLVLA, DSLSFYAWINLILLILWLFVG, WGMIIFYIGPILFLNSLFTFL, KEIPALANFAIIFGPYLGLFF, and IFICGFCMLFLQNLVLIQIFA.

The protein resides in the cell membrane. This is an uncharacterized protein from Campylobacter jejuni subsp. jejuni serotype O:2 (strain ATCC 700819 / NCTC 11168).